Reading from the N-terminus, the 503-residue chain is Probable cytosol aminopeptidase (503 aa).

Residues Lys-268 and Asp-273 each contribute to the Mn(2+) site. Residue Lys-280 is part of the active site. 3 residues coordinate Mn(2+): Asp-291, Asp-350, and Glu-352. Arg-354 is a catalytic residue.

The protein belongs to the peptidase M17 family. It depends on Mn(2+) as a cofactor.

Its subcellular location is the cytoplasm. The enzyme catalyses Release of an N-terminal amino acid, Xaa-|-Yaa-, in which Xaa is preferably Leu, but may be other amino acids including Pro although not Arg or Lys, and Yaa may be Pro. Amino acid amides and methyl esters are also readily hydrolyzed, but rates on arylamides are exceedingly low.. It carries out the reaction Release of an N-terminal amino acid, preferentially leucine, but not glutamic or aspartic acids.. Presumably involved in the processing and regular turnover of intracellular proteins. Catalyzes the removal of unsubstituted N-terminal amino acids from various peptides. The polypeptide is Probable cytosol aminopeptidase (Nocardia farcinica (strain IFM 10152)).